The sequence spans 481 residues: Autolysin (481 aa).

The Peptidase C51 domain occupies 7–142 (KNEFIERLKT…LQDDNMLMIS (136 aa)). Positions 198–323 (SNPKGIVIHN…NEFTSTSCPH (126 aa)) constitute an N-acetylmuramoyl-L-alanine amidase domain. The SH3b domain maps to 398–466 (EESARFTNGN…YLPIRTWNGS (69 aa)).

This sequence belongs to the N-acetylmuramoyl-L-alanine amidase 2 family.

The protein localises to the secreted. It carries out the reaction Hydrolyzes the link between N-acetylmuramoyl residues and L-amino acid residues in certain cell-wall glycopeptides.. In terms of biological role, autolysins are involved in some important biological processes such as cell separation, cell-wall turnover, competence for genetic transformation, formation of the flagella and sporulation. Autolysin strictly depends on the presence of choline-containing cell walls for activity. This Staphylococcus aureus protein is Autolysin (lytA).